The chain runs to 94 residues: Cell division topological specificity factor (94 aa).

It belongs to the MinE family.

Functionally, prevents the cell division inhibition by proteins MinC and MinD at internal division sites while permitting inhibition at polar sites. This ensures cell division at the proper site by restricting the formation of a division septum at the midpoint of the long axis of the cell. The polypeptide is Cell division topological specificity factor (Hamiltonella defensa subsp. Acyrthosiphon pisum (strain 5AT)).